Consider the following 171-residue polypeptide: 3-hydroxydecanoyl-[acyl-carrier-protein] dehydratase (171 aa).

Histidine 70 is a catalytic residue.

Belongs to the thioester dehydratase family. FabA subfamily. In terms of assembly, homodimer.

It localises to the cytoplasm. It catalyses the reaction a (3R)-hydroxyacyl-[ACP] = a (2E)-enoyl-[ACP] + H2O. The enzyme catalyses (3R)-hydroxydecanoyl-[ACP] = (2E)-decenoyl-[ACP] + H2O. The catalysed reaction is (2E)-decenoyl-[ACP] = (3Z)-decenoyl-[ACP]. The protein operates within lipid metabolism; fatty acid biosynthesis. In terms of biological role, necessary for the introduction of cis unsaturation into fatty acids. Catalyzes the dehydration of (3R)-3-hydroxydecanoyl-ACP to E-(2)-decenoyl-ACP and then its isomerization to Z-(3)-decenoyl-ACP. Can catalyze the dehydratase reaction for beta-hydroxyacyl-ACPs with saturated chain lengths up to 16:0, being most active on intermediate chain length. The polypeptide is 3-hydroxydecanoyl-[acyl-carrier-protein] dehydratase (Mesorhizobium japonicum (strain LMG 29417 / CECT 9101 / MAFF 303099) (Mesorhizobium loti (strain MAFF 303099))).